The following is a 280-amino-acid chain: Phosphatidylserine decarboxylase proenzyme (280 aa).

Active-site charge relay system; for autoendoproteolytic cleavage activity residues include Asp86, His143, and Ser246. Residue Ser246 is the Schiff-base intermediate with substrate; via pyruvic acid; for decarboxylase activity of the active site. Ser246 is modified (pyruvic acid (Ser); by autocatalysis).

It belongs to the phosphatidylserine decarboxylase family. PSD-B subfamily. Prokaryotic type I sub-subfamily. Heterodimer of a large membrane-associated beta subunit and a small pyruvoyl-containing alpha subunit. It depends on pyruvate as a cofactor. In terms of processing, is synthesized initially as an inactive proenzyme. Formation of the active enzyme involves a self-maturation process in which the active site pyruvoyl group is generated from an internal serine residue via an autocatalytic post-translational modification. Two non-identical subunits are generated from the proenzyme in this reaction, and the pyruvate is formed at the N-terminus of the alpha chain, which is derived from the carboxyl end of the proenzyme. The autoendoproteolytic cleavage occurs by a canonical serine protease mechanism, in which the side chain hydroxyl group of the serine supplies its oxygen atom to form the C-terminus of the beta chain, while the remainder of the serine residue undergoes an oxidative deamination to produce ammonia and the pyruvoyl prosthetic group on the alpha chain. During this reaction, the Ser that is part of the protease active site of the proenzyme becomes the pyruvoyl prosthetic group, which constitutes an essential element of the active site of the mature decarboxylase.

It is found in the cell membrane. The catalysed reaction is a 1,2-diacyl-sn-glycero-3-phospho-L-serine + H(+) = a 1,2-diacyl-sn-glycero-3-phosphoethanolamine + CO2. It functions in the pathway phospholipid metabolism; phosphatidylethanolamine biosynthesis; phosphatidylethanolamine from CDP-diacylglycerol: step 2/2. In terms of biological role, catalyzes the formation of phosphatidylethanolamine (PtdEtn) from phosphatidylserine (PtdSer). This chain is Phosphatidylserine decarboxylase proenzyme, found in Brevibacillus brevis (strain 47 / JCM 6285 / NBRC 100599).